The primary structure comprises 440 residues: MVTMCGGHRPENFLHQVLTEFGEELAGEGKSEVGGGAPRSYLQVASAECWAAAPAVHVGEPVHAGGLHTERGADPVIGLYLVHRGGACQTPTVGNRQTPTLGIHARPRRRATTSLLTLLLAFGKNAVRCALIGPGSLTSRTRPLTEPLGEKERREVFFPPRPERVEHNVESSRWEPRRRGACGSRGGNFPSPRGGSGVASLERAESSSTEPAKAIKPIDRKSVHQICSGPVVPSLSTAVKELVENSLDAGATNIDLKLKDYGVDLIEVSGNGCGVEEENFEGLTLKHHTSKIQEFADLPQVETFGFRGEALSSLCALSDVTISTCHVSAKVGTRLVFDHYGKIIQKTPYPHPRGMTVSVKQLFSTLPVHHKEFQRNIKKKRACFPFAFCRDCQFPEASPAMLPVQPAELTPRSTPPHPCSLEDNVITVFSSVKNGPGSSR.

The span at 164–178 shows a compositional bias: basic and acidic residues; it reads RVEHNVESSRWEPRR. The interval 164–215 is disordered; it reads RVEHNVESSRWEPRRRGACGSRGGNFPSPRGGSGVASLERAESSSTEPAKAI. Residues 230-364 enclose the Histidine kinase domain; it reads PVVPSLSTAV…MTVSVKQLFS (135 aa).

It belongs to the DNA mismatch repair MutL/HexB family. Highly expressed in kidney, spleen, adrenal gland, ovary and cerebellum and to a lower extent in liver, esophagus, stomach, duodenum, colon, bladder, uterus, lung, pancreas and cerebrum. Not expressed in heart.

This Homo sapiens (Human) protein is Putative postmeiotic segregation increased 2-like protein 1 (PMS2P1).